Consider the following 192-residue polypeptide: Large ribosomal subunit protein bL9 (192 aa).

Residues 172–192 are disordered; that stretch reads DALRPEDFFDPEADGVDEDEA. Over residues 179–192 the composition is skewed to acidic residues; that stretch reads FFDPEADGVDEDEA.

The protein belongs to the bacterial ribosomal protein bL9 family.

Its function is as follows. Binds to the 23S rRNA. The chain is Large ribosomal subunit protein bL9 from Rhizobium leguminosarum bv. trifolii (strain WSM2304).